The following is a 476-amino-acid chain: mRNA cap guanine-N(7) methyltransferase (476 aa).

The segment covering 1–14 (MANSTKAEEYEKMS) has biased composition (basic and acidic residues). The disordered stretch occupies residues 1–128 (MANSTKAEEY…TGDGTQNKRK (128 aa)). Positions 20–50 (ASVNSEAESSFSINENTTASGTGLSGKTSVC) are enriched in polar residues. Residues Ser-24, Ser-28, and Ser-29 each carry the phosphoserine modification. 3 stretches are compositionally biased toward basic and acidic residues: residues 54–68 (DTAR…DLVK), 84–93 (LDPEIVPEEK), and 107–117 (RETEDVPKDEY). Ser-118 carries the post-translational modification Phosphoserine. The Nuclear localization signal motif lies at 126–128 (KRK). An mRNA cap 0 methyltransferase domain is found at 167–475 (SRIFYLRNFN…IYLVFAFEKQ (309 aa)). Residue 176–177 (NN) participates in mRNA binding. S-adenosyl-L-methionine-binding residues include Lys-180, Gly-205, Asp-227, Asp-261, Gln-284, and Tyr-289.

Belongs to the class I-like SAM-binding methyltransferase superfamily. mRNA cap 0 methyltransferase family. In terms of assembly, interacts with importin alpha, leading to stimulate both RNA-binding and methyltransferase activity. Interaction with importin alpha and beta is required for its nuclear localization, importin beta dissociating in response to RanGTP, allowing RNMT-importin alpha to bind RNA substrates. Interacts with elongating form of polymerase II and RNGTT. Interacts with RAMAC, this interaction significantly enhances RNA-binding and cap methyltransferase activity.

Its subcellular location is the nucleus. It carries out the reaction a 5'-end (5'-triphosphoguanosine)-ribonucleoside in mRNA + S-adenosyl-L-methionine = a 5'-end (N(7)-methyl 5'-triphosphoguanosine)-ribonucleoside in mRNA + S-adenosyl-L-homocysteine. With respect to regulation, methyltransferase activity is activated by RAMAC. Catalytic subunit of the mRNA-capping methyltransferase RNMT:RAMAC complex that methylates the N7 position of the added guanosine to the 5'-cap structure of mRNAs. Binds RNA containing 5'-terminal GpppC. The polypeptide is mRNA cap guanine-N(7) methyltransferase (RNMT) (Macaca fascicularis (Crab-eating macaque)).